The primary structure comprises 888 residues: Potassium channel AKT6 (888 aa).

Residues 1–84 (MEKKKVWFWG…PFDPRYRAWE (84 aa)) lie on the Cytoplasmic side of the membrane. Positions 10–31 (GVKDDGEGGGGRGGGRTKDAED) are disordered. A helical transmembrane segment spans residues 85–105 (TFLVFLVLYTAWASPFEFGFL). Topologically, residues 106-113 (QKPRPPLS) are extracellular. A helical transmembrane segment spans residues 114–134 (ILDNIVNGFFAVDIVLTFFVA). The Cytoplasmic segment spans residues 135–155 (FLDKVTYLLVDDPKRIAWRYA). The chain crosses the membrane as a helical span at residues 156 to 176 (STWLIFDVVSTFPYEIFGSLL). At 177-184 (HESIQGYG) the chain is on the extracellular side. Residues 185–205 (IFSMLRLWRLRRVSNCFARLE) traverse the membrane as a helical; Voltage-sensor segment. Topologically, residues 206–219 (KDRKYSYFWVRCSK) are cytoplasmic. A helical membrane pass occupies residues 220–240 (LLLVTLFVIHCGACFLYSIAA). Over 241–267 (HYPDPSKTFMALTDENWKESPIAVRYN) the chain is Extracellular. The pore-forming intramembrane region spans 268–287 (TAMYWSITTFSTTGYGDIHG). The Extracellular segment spans residues 288-291 (VNSR). The helical transmembrane segment at 292 to 312 (EMTFILFYMVFNLGLSAYIIG) threads the bilayer. Over 313–888 (NMTNLVVHVT…GDFLLLSRDP (576 aa)) the chain is Cytoplasmic. 398–519 (LFHGISNDLL…IMNNLLQHLK (122 aa)) serves as a coordination point for a nucleoside 3',5'-cyclic phosphate. ANK repeat units follow at residues 543-572 (DLPLSLCFAAARGDDLLLHQLLRRGSSPNE), 576-605 (DGRTALHIAASKGSHYCVVLLLEHGADPNI), 609-638 (EGNVPLWEAIIGRHREIAKLLAENGAKLSL), 640-669 (SVSYFSGLAVEKNCLDALKDIIKYGGDVTL), and 673-702 (NGTTALHRAVSEGHLEIVKFLLDQGADLDW). Residues 822–888 (RVTISSPENG…GDFLLLSRDP (67 aa)) form the KHA domain.

It belongs to the potassium channel family. Plant (TC 1.A.1.4) subfamily. As to quaternary structure, the potassium channel is probably composed of a homo- or heterotetrameric complex of pore-forming subunits. As to expression, predominantly expressed in flowers; especially in pollen.

The protein localises to the membrane. Highly selective inward-rectifying potassium channel that could mediate potassium uptake in the pollen membrane. Plays an important role in pollen tube development. Assuming opened or closed conformations in response to the voltage difference across the membrane, the channel is activated by hyperpolarization. May interact with the cytoskeleton or with regulatory proteins. The polypeptide is Potassium channel AKT6 (AKT6) (Arabidopsis thaliana (Mouse-ear cress)).